The following is a 120-amino-acid chain: Holo-[acyl-carrier-protein] synthase (120 aa).

Mg(2+) contacts are provided by aspartate 6 and glutamate 55.

This sequence belongs to the P-Pant transferase superfamily. AcpS family. Mg(2+) serves as cofactor.

The protein localises to the cytoplasm. It catalyses the reaction apo-[ACP] + CoA = holo-[ACP] + adenosine 3',5'-bisphosphate + H(+). In terms of biological role, transfers the 4'-phosphopantetheine moiety from coenzyme A to a Ser of acyl-carrier-protein. This chain is Holo-[acyl-carrier-protein] synthase, found in Pelodictyon phaeoclathratiforme (strain DSM 5477 / BU-1).